The following is a 247-amino-acid chain: uncharacterized protein (247 aa).

3 consecutive transmembrane segments (helical) span residues 108–128, 136–156, and 194–214; these read WYIN…FLII, IFSV…NIIC, and GAKL…LFFI.

The protein resides in the membrane. This is an uncharacterized protein from Caenorhabditis elegans.